The primary structure comprises 141 residues: Large ribosomal subunit protein uL11 (141 aa).

The protein belongs to the universal ribosomal protein uL11 family. As to quaternary structure, part of the ribosomal stalk of the 50S ribosomal subunit. Interacts with L10 and the large rRNA to form the base of the stalk. L10 forms an elongated spine to which L12 dimers bind in a sequential fashion forming a multimeric L10(L12)X complex. Post-translationally, one or more lysine residues are methylated.

Functionally, forms part of the ribosomal stalk which helps the ribosome interact with GTP-bound translation factors. This chain is Large ribosomal subunit protein uL11, found in Chlorobium chlorochromatii (strain CaD3).